A 119-amino-acid polypeptide reads, in one-letter code: Large ribosomal subunit protein uL18 (119 aa).

It belongs to the universal ribosomal protein uL18 family. In terms of assembly, part of the 50S ribosomal subunit; part of the 5S rRNA/L5/L18/L25 subcomplex. Contacts the 5S and 23S rRNAs.

In terms of biological role, this is one of the proteins that bind and probably mediate the attachment of the 5S RNA into the large ribosomal subunit, where it forms part of the central protuberance. This is Large ribosomal subunit protein uL18 from Desulfovibrio desulfuricans (strain ATCC 27774 / DSM 6949 / MB).